Here is a 426-residue protein sequence, read N- to C-terminus: Isovaleryl-CoA dehydrogenase, mitochondrial (426 aa).

The N-terminal 32 residues, 1-32 (MATAAWLLGRRVASWRMRPPLQSLAGLITQRT), are a transit peptide targeting the mitochondrion. An N6-acetyllysine; alternate mark is found at lysine 58 and lysine 78. An N6-succinyllysine; alternate mark is found at lysine 58 and lysine 78. FAD-binding positions include 165–174 (LAMSEPNAGS) and 198–200 (WIT). Serine 174 is a substrate binding site. 222 to 223 (SR) is a substrate binding site. N6-acetyllysine is present on lysine 241. Residues tyrosine 277 and 284–287 (DLER) contribute to the substrate site. Catalysis depends on glutamate 286, which acts as the Proton acceptor. Arginine 312 contributes to the FAD binding site. Residue lysine 318 is modified to N6-succinyllysine. FAD contacts are provided by residues glutamine 323 and 380-384 (QCLGG). 407 to 408 (AG) contacts substrate. Position 409–411 (409–411 (TSE)) interacts with FAD.

It belongs to the acyl-CoA dehydrogenase family. Homotetramer. FAD serves as cofactor.

It is found in the mitochondrion matrix. The catalysed reaction is 3-methylbutanoyl-CoA + oxidized [electron-transfer flavoprotein] + H(+) = 3-methylbut-2-enoyl-CoA + reduced [electron-transfer flavoprotein]. The enzyme catalyses pentanoyl-CoA + oxidized [electron-transfer flavoprotein] + H(+) = (2E)-pentenoyl-CoA + reduced [electron-transfer flavoprotein]. It carries out the reaction hexanoyl-CoA + oxidized [electron-transfer flavoprotein] + H(+) = (2E)-hexenoyl-CoA + reduced [electron-transfer flavoprotein]. It catalyses the reaction butanoyl-CoA + oxidized [electron-transfer flavoprotein] + H(+) = (2E)-butenoyl-CoA + reduced [electron-transfer flavoprotein]. Its pathway is amino-acid degradation; L-leucine degradation; (S)-3-hydroxy-3-methylglutaryl-CoA from 3-isovaleryl-CoA: step 1/3. Its function is as follows. Catalyzes the conversion of isovaleryl-CoA/3-methylbutanoyl-CoA to 3-methylbut-2-enoyl-CoA as an intermediate step in the leucine (Leu) catabolic pathway. To a lesser extent, is also able to catalyze the oxidation of other saturated short-chain acyl-CoA thioesters as pentanoyl-CoA, hexenoyl-CoA and butenoyl-CoA. The protein is Isovaleryl-CoA dehydrogenase, mitochondrial (IVD) of Bos taurus (Bovine).